Reading from the N-terminus, the 309-residue chain is Glutaminase (309 aa).

Substrate is bound by residues Ser-65, Asn-117, Glu-162, Asn-169, Tyr-193, Tyr-245, and Val-263.

The protein belongs to the glutaminase family. Homotetramer.

It carries out the reaction L-glutamine + H2O = L-glutamate + NH4(+). This chain is Glutaminase, found in Bacillus cereus (strain ATCC 10987 / NRS 248).